The sequence spans 203 residues: Small ribosomal subunit protein uS4 (203 aa).

An S4 RNA-binding domain is found at 93-156 (RRLDNVVYRL…MKVPAILEAV (64 aa)).

It belongs to the universal ribosomal protein uS4 family. In terms of assembly, part of the 30S ribosomal subunit. Contacts protein S5. The interaction surface between S4 and S5 is involved in control of translational fidelity.

Its function is as follows. One of the primary rRNA binding proteins, it binds directly to 16S rRNA where it nucleates assembly of the body of the 30S subunit. Functionally, with S5 and S12 plays an important role in translational accuracy. The protein is Small ribosomal subunit protein uS4 of Streptococcus pyogenes serotype M1.